The sequence spans 370 residues: Glutamate 5-kinase (370 aa).

An ATP-binding site is contributed by K12. Residues S52, D139, and N151 each contribute to the substrate site. ATP-binding positions include 171–172 (SD) and 213–219 (TGGMFTK). The 79-residue stretch at 278-356 (QAHIAVDAGA…SDIESILGYS (79 aa)) folds into the PUA domain.

It belongs to the glutamate 5-kinase family.

The protein resides in the cytoplasm. It carries out the reaction L-glutamate + ATP = L-glutamyl 5-phosphate + ADP. Its pathway is amino-acid biosynthesis; L-proline biosynthesis; L-glutamate 5-semialdehyde from L-glutamate: step 1/2. In terms of biological role, catalyzes the transfer of a phosphate group to glutamate to form L-glutamate 5-phosphate. The sequence is that of Glutamate 5-kinase from Herpetosiphon aurantiacus (strain ATCC 23779 / DSM 785 / 114-95).